The chain runs to 636 residues: Beta-galactosidase-1-like protein 2 (636 aa).

A signal peptide spans 1–32 (MTTWSLRRRPARTLGLLLLVVLGFLVLRRLDW). Glu201 acts as the Proton donor in catalysis. Glu277 functions as the Nucleophile in the catalytic mechanism.

This sequence belongs to the glycosyl hydrolase 35 family.

Its subcellular location is the secreted. In Homo sapiens (Human), this protein is Beta-galactosidase-1-like protein 2 (GLB1L2).